Here is a 367-residue protein sequence, read N- to C-terminus: Glutamate 5-kinase (367 aa).

Lysine 8 contributes to the ATP binding site. Residues serine 49, aspartate 136, and asparagine 148 each coordinate substrate. ATP is bound by residues 168–169 and 210–216; these read TD and TGGMATK. One can recognise a PUA domain in the interval 275 to 353; that stretch reads TGKLLLDAGA…DQIVQILGYE (79 aa).

Belongs to the glutamate 5-kinase family.

The protein localises to the cytoplasm. The catalysed reaction is L-glutamate + ATP = L-glutamyl 5-phosphate + ADP. Its pathway is amino-acid biosynthesis; L-proline biosynthesis; L-glutamate 5-semialdehyde from L-glutamate: step 1/2. Functionally, catalyzes the transfer of a phosphate group to glutamate to form L-glutamate 5-phosphate. The polypeptide is Glutamate 5-kinase (Synechococcus elongatus (strain ATCC 33912 / PCC 7942 / FACHB-805) (Anacystis nidulans R2)).